We begin with the raw amino-acid sequence, 229 residues long: Cytidylate kinase (229 aa).

Residue 12-20 participates in ATP binding; sequence GPSGAGKGT.

This sequence belongs to the cytidylate kinase family. Type 1 subfamily.

It localises to the cytoplasm. The catalysed reaction is CMP + ATP = CDP + ADP. It catalyses the reaction dCMP + ATP = dCDP + ADP. The polypeptide is Cytidylate kinase (Serratia proteamaculans (strain 568)).